The primary structure comprises 423 residues: T-box protein 2 (423 aa).

Residues 70-243 (LWQQFSQCGT…NNPFAKGFRD (174 aa)) constitute a DNA-binding region (T-box). Disordered regions lie at residues 238–324 (AKGF…PLRS) and 384–423 (VEAT…LSKP). A compositionally biased stretch (polar residues) spans 261–283 (DATQSPPGKTASLPTHSPHPSES). Low complexity predominate over residues 302–317 (TPTTSSLSTSTTPTLS). Positions 394 to 404 (AEKPEVKKEQK) are enriched in basic and acidic residues.

Post-translationally, sumoylated. In terms of tissue distribution, expressed in body wall muscles and a subset of pharyngeal neurons. Expressed in head neurons and occassionally tail neurons. Not expressed in the pharynx.

It localises to the nucleus. Its function is as follows. Involved in the transcriptional regulation of genes required for the development of pharyngeal muscles derived from the ABa lineage. Acts as a transcriptional repressor and binds to T-box binding sites in its own promoter to negatively autoregulate its own expression in neurons, seam cells and the gut in order to restrict its expression to certain tissues. May function together with the nfya-1-NF-Y complex to repress its own expression. Plays a role in neural fate specification in the hermaphrodite-specific neuron (HSN)/PHB neuron lineage, acting in concert with homeobox protein egl-5 and the asymmetric cell division protein ham-1. This chain is T-box protein 2, found in Caenorhabditis elegans.